The chain runs to 317 residues: Tyrosine--tRNA ligase (317 aa).

Tyr-33 is a binding site for L-tyrosine. The short motif at 38–46 (PSGKIHMGH) is the 'HIGH' region element. L-tyrosine is bound by residues Tyr-155, Gln-159, Asp-162, and Gln-177. The 'KMSKS' region motif lies at 211 to 215 (KMASS). Residue Ser-214 participates in ATP binding.

The protein belongs to the class-I aminoacyl-tRNA synthetase family. TyrS type 3 subfamily. As to quaternary structure, homodimer.

It is found in the cytoplasm. The enzyme catalyses tRNA(Tyr) + L-tyrosine + ATP = L-tyrosyl-tRNA(Tyr) + AMP + diphosphate + H(+). Catalyzes the attachment of tyrosine to tRNA(Tyr) in a two-step reaction: tyrosine is first activated by ATP to form Tyr-AMP and then transferred to the acceptor end of tRNA(Tyr). The polypeptide is Tyrosine--tRNA ligase (Methanosarcina barkeri (strain Fusaro / DSM 804)).